Reading from the N-terminus, the 775-residue chain is Subtilisin-like protease SBT1.2 (775 aa).

Positions M1–S20 are cleaved as a signal peptide. The region spanning T27–V111 is the Inhibitor I9 domain. One can recognise a Peptidase S8 domain in the interval S116–I618. Residues D146 and H222 each act as charge relay system in the active site. Residues G388–Y470 enclose the PA domain. Residues N472 and N544 are each glycosylated (N-linked (GlcNAc...) asparagine). S552 serves as the catalytic Charge relay system. N-linked (GlcNAc...) asparagine glycosylation is present at N652.

The protein belongs to the peptidase S8 family. In terms of tissue distribution, mostly expressed in leaves and cotyledons (especially in epidermal cells), and, to a lower extent, in floral buds, stems, and siliques. Strongly expressed in stomatal precursor cells (meristemoids and guard mother cells).

The protein resides in the secreted. The protein localises to the extracellular space. It localises to the apoplast. It is found in the cell membrane. Serine protease involved in the negative regulation of stomatal density and distribution. Not active on EPFL6 (AC Q1PEY6). Positive regulator of water use efficiency (WUE). This chain is Subtilisin-like protease SBT1.2, found in Arabidopsis thaliana (Mouse-ear cress).